Reading from the N-terminus, the 692-residue chain is Follicle-stimulating hormone receptor (692 aa).

The N-terminal stretch at 1 to 17 (MALLLVSLLAFLGTGSG) is a signal peptide. 2 disulfide bridges follow: C18–C25 and C23–C32. The region spanning 18–46 (CHHWLCHCSNRVFLCQDSKVTEIPTDLPR) is the LRRNT domain. The Extracellular segment spans residues 18 to 365 (CHHWLCHCSN…EDIMGYNILR (348 aa)). 9 LRR repeats span residues 49–72 (IELR…FGDL), 73–97 (EKIE…LPKL), 98–118 (HEIR…AFQN), 119–143 (LPSL…KIQS), 144–169 (LQKV…MGLS), 170–192 (FESV…AFNG), 193–216 (TQLD…VFQG), 217–240 (ASGP…GLEN), and 241–259 (LKKL…PNLD). N191 and N199 each carry an N-linked (GlcNAc...) asparagine glycan. Disulfide bonds link C275–C345, C276–C292, C276–C355, and C292–C337. N293 is a glycosylation site (N-linked (GlcNAc...) asparagine). At Y334 the chain carries Sulfotyrosine. Residues 366 to 386 (VLIWFISILAITGNTTVLVVL) form a helical membrane-spanning segment. At 387 to 397 (TTSQYKLTVPR) the chain is on the cytoplasmic side. Residues 398-420 (FLMCNLAFADLCIGIYLLLIASV) traverse the membrane as a helical segment. Topologically, residues 421-442 (DIHTKSQYHNYAIDWQTGAGCD) are extracellular. A disulfide bridge links C441 with C516. A helical membrane pass occupies residues 443–464 (AAGFFTVFASELSVYTLTAITL). Residues 465–484 (ERWHTITHAMQLECKVQLRH) lie on the Cytoplasmic side of the membrane. Residues 485–507 (AASVMVLGWTFAFAAALFPIFGI) traverse the membrane as a helical segment. The Extracellular portion of the chain corresponds to 508–527 (SSYMKVSICLPMDIDSPLSQ). Residues 528 to 549 (LYVMALLVLNVLAFVVICGCYT) traverse the membrane as a helical segment. Residues 550–572 (HIYLTVRNPTIVSSSSDTKIAKR) are Cytoplasmic-facing. The helical transmembrane segment at 573–596 (MATLIFTDFLCMAPISFFAISASL) threads the bilayer. Topologically, residues 597-607 (KVPLITVSKAK) are extracellular. The helical transmembrane segment at 608–629 (ILLVLFYPINSCANPFLYAIFT) threads the bilayer. At 630–692 (KNFRRDFFIL…LVPLNHSSQN (63 aa)) the chain is on the cytoplasmic side.

Belongs to the G-protein coupled receptor 1 family. FSH/LSH/TSH subfamily. In terms of assembly, homotrimer. Functions as a homotrimer binding the FSH hormone heterodimer composed of CGA and FSHB. Interacts with ARRB2. Interacts with APPL2; interaction is independent of follicle stimulating hormone stimulation. N-glycosylated; indirectly required for FSH-binding, possibly via a conformational change that allows high affinity binding of hormone. Post-translationally, sulfated. As to expression, sertoli cells and ovarian granulosa cells.

Its subcellular location is the cell membrane. G protein-coupled receptor for follitropin, the follicle-stimulating hormone. Through cAMP production activates the downstream PI3K-AKT and ERK1/ERK2 signaling pathways. The protein is Follicle-stimulating hormone receptor (Fshr) of Rattus norvegicus (Rat).